The chain runs to 212 residues: ER lumen protein-retaining receptor 1 (212 aa).

The Lumenal portion of the chain corresponds to 1–4 (MNLF). Residues 5 to 24 (RFLGDLSHLLAIILLLLKIW) traverse the membrane as a helical segment. The Cytoplasmic segment spans residues 25 to 32 (KSRSCAGI). Residues 33 to 52 (SGKSQVLFAVVFTARYLDLF) form a helical membrane-spanning segment. The interval 47-48 (RY) is interaction with the K-D-E-L motif on target proteins. Residues 53 to 58 (TNYISL) lie on the Lumenal side of the membrane. The helical transmembrane segment at 59 to 79 (YNTCMKVVYIACSFTTVWMIY) threads the bilayer. The Cytoplasmic portion of the chain corresponds to 80–92 (SKFKATYDGNHDT). Residues 93-110 (FRVEFLVVPTAVLAFLVN) form a helical membrane-spanning segment. The Lumenal segment spans residues 111–116 (HDFTPL). The chain crosses the membrane as a helical span at residues 117–135 (EILWTFSIYLESVAILPQL). At 136–149 (FMVSKTGEAETITS) the chain is on the cytoplasmic side. The chain crosses the membrane as a helical span at residues 150–168 (HYLFALGVYRTLYLFNWIW). The tract at residues 159-169 (RTLYLFNWIWR) is interaction with the K-D-E-L motif on target proteins. At 169-178 (RYHFEGFFDL) the chain is on the lumenal side. A helical transmembrane segment spans residues 179–199 (IAIVAGLVQTVLYCDFFYLYI). The Cytoplasmic portion of the chain corresponds to 200–212 (TKVLKGKKLSLPA). An important for recycling of cargo proteins with the sequence motif K-D-E-L from the Golgi to the endoplasmic reticulum region spans residues 204–207 (KGKK). Position 209 is a phosphoserine; by PKA (serine 209).

The protein belongs to the ERD2 family. As to quaternary structure, upon ligand binding the receptor oligomerizes and interacts with components of the transport machinery such as ARFGAP1 and ARF1. Post-translationally, phosphorylation by PKA at Ser-209 is required for endoplasmic reticulum retention function.

It is found in the golgi apparatus membrane. The protein localises to the cytoplasmic vesicle. Its subcellular location is the COPI-coated vesicle membrane. It localises to the endoplasmic reticulum membrane. The protein resides in the endoplasmic reticulum-Golgi intermediate compartment membrane. Its function is as follows. Receptor for the C-terminal sequence motif K-D-E-L that is present on endoplasmic reticulum resident proteins and that mediates their recycling from the Golgi back to the endoplasmic reticulum. This Rattus norvegicus (Rat) protein is ER lumen protein-retaining receptor 1 (Kdelr1).